A 509-amino-acid polypeptide reads, in one-letter code: Protein disulfide-isomerase (509 aa).

An N-terminal signal peptide occupies residues 1–19; the sequence is MLSRALLCLALAWAARVGA. Residues 20-136 enclose the Thioredoxin 1 domain; that stretch reads DALEEEDNVL…IVNWLKKRTG (117 aa). Catalysis depends on nucleophile residues Cys55 and Cys58. A disulfide bond links Cys55 and Cys58. N6-acetyllysine is present on Lys202. N6-succinyllysine is present on residues Lys224 and Lys273. Residues Ser333 and Ser359 each carry the phosphoserine modification. The region spanning 335-477 is the Thioredoxin 2 domain; that stretch reads ELTAEKITQF…FKKFLESGGQ (143 aa). Active-site nucleophile residues include Cys399 and Cys402. Cys399 and Cys402 are oxidised to a cystine. At Ser429 the chain carries Phosphoserine. A Prevents secretion from ER motif is present at residues 506–509; sequence KDEL.

The protein belongs to the protein disulfide isomerase family. In terms of assembly, heterodimer; heterodimerizes with the protein microsomal triglyceride transfer MTTP. Homodimer. Monomers and homotetramers may also occur. Interacts with P4HA2, forming a heterotetramer consisting of 2 alpha subunits (P4HA2) and 2 beta (P4HB), where P4HB plays the role of a structural subunit; this tetramer catalyzes the formation of 4-hydroxyproline in collagen. Also constitutes the structural subunit of the microsomal triacylglycerol transfer protein MTTP in mammalian cells. Stabilizes both enzymes and retain them in the ER without contributing to the catalytic activity. Binds UBQLN1. Interacts with ERO1B. Interacts with ILDR2. Interacts with ERN1/IRE1A (via N-terminus); the interaction is enhanced by phosphorylation of P4HB by FAM20C in response to endoplasmic reticulum stress and results in attenuation of ERN1 activity. Phosphorylation of Ser-359 by FAM20C is induced by endoplasmic reticulum stress and results in a functional switch from oxidoreductase to molecular chaperone. It also promotes interaction with ERN1.

It is found in the endoplasmic reticulum. The protein resides in the endoplasmic reticulum lumen. It localises to the melanosome. The protein localises to the cell membrane. The enzyme catalyses Catalyzes the rearrangement of -S-S- bonds in proteins.. In terms of biological role, this multifunctional protein catalyzes the formation, breakage and rearrangement of disulfide bonds. At the cell surface, seems to act as a reductase that cleaves disulfide bonds of proteins attached to the cell. May therefore cause structural modifications of exofacial proteins. Inside the cell, seems to form/rearrange disulfide bonds of nascent proteins. At high concentrations and following phosphorylation by FAM20C, functions as a chaperone that inhibits aggregation of misfolded proteins. At low concentrations, facilitates aggregation (anti-chaperone activity). May be involved with other chaperones in the structural modification of the TG precursor in hormone biogenesis. Also acts as a structural subunit of various enzymes such as prolyl 4-hydroxylase and microsomal triacylglycerol transfer protein MTTP. Receptor for LGALS9; the interaction retains P4HB at the cell surface of Th2 T helper cells, increasing disulfide reductase activity at the plasma membrane, altering the plasma membrane redox state and enhancing cell migration. This chain is Protein disulfide-isomerase (P4hb), found in Rattus norvegicus (Rat).